Consider the following 376-residue polypeptide: Sulfate/thiosulfate import ATP-binding protein CysA 1 (376 aa).

An ABC transporter domain is found at 3–237 (IRLTNISKKF…PNSRFVFDFL (235 aa)). Residue 35 to 42 (GPSGSGKT) coordinates ATP.

Belongs to the ABC transporter superfamily. Sulfate/tungstate importer (TC 3.A.1.6) family. As to quaternary structure, the complex is composed of two ATP-binding proteins (CysA), two transmembrane proteins (CysT and CysW) and a solute-binding protein (CysP).

It localises to the cell inner membrane. It catalyses the reaction sulfate(out) + ATP + H2O = sulfate(in) + ADP + phosphate + H(+). The catalysed reaction is thiosulfate(out) + ATP + H2O = thiosulfate(in) + ADP + phosphate + H(+). Its function is as follows. Part of the ABC transporter complex CysAWTP involved in sulfate/thiosulfate import. Responsible for energy coupling to the transport system. The polypeptide is Sulfate/thiosulfate import ATP-binding protein CysA 1 (Shewanella oneidensis (strain ATCC 700550 / JCM 31522 / CIP 106686 / LMG 19005 / NCIMB 14063 / MR-1)).